A 188-amino-acid chain; its full sequence is Small ribosomal subunit protein eS8 (188 aa).

Residues 1 to 34 (MGISRDSRHKRRLTGGRYPVHKKKRKYELGRPSS) form a disordered region. The segment covering 7–26 (SRHKRRLTGGRYPVHKKKRK) has biased composition (basic residues).

This sequence belongs to the eukaryotic ribosomal protein eS8 family.

The chain is Small ribosomal subunit protein eS8 (RPS8) from Theileria parva (East coast fever infection agent).